Reading from the N-terminus, the 69-residue chain is Putative antitoxin AF_1481 (69 aa).

The protein belongs to the UPF0330 family.

Possibly the antitoxin component of a type II toxin-antitoxin (TA) system. The sequence is that of Putative antitoxin AF_1481 from Archaeoglobus fulgidus (strain ATCC 49558 / DSM 4304 / JCM 9628 / NBRC 100126 / VC-16).